Consider the following 361-residue polypeptide: Probable sugar phosphate/phosphate translocator At1g12500 (361 aa).

Val2 is modified (N-acetylvaline). 9 consecutive transmembrane segments (helical) span residues 56-76, 90-110, 125-145, 153-173, 192-212, 240-260, 276-296, 306-326, and 329-349; these read TILT…VLLL, IFLT…VINI, FLKI…GNTS, FNQA…FLIT, IVLA…ICVA, LLLY…LYIE, LIIF…LTNF, TLQV…VLIF, and PVTV…VLYS. Residues 89 to 196 enclose the EamA domain; sequence PIFLTMTHML…PVVSGIVLAS (108 aa).

It belongs to the TPT transporter family. TPT (TC 2.A.7.9) subfamily.

The protein resides in the membrane. This is Probable sugar phosphate/phosphate translocator At1g12500 from Arabidopsis thaliana (Mouse-ear cress).